Reading from the N-terminus, the 883-residue chain is Phosphoenolpyruvate carboxylase (883 aa).

Catalysis depends on residues H138 and K546.

This sequence belongs to the PEPCase type 1 family. Mg(2+) is required as a cofactor.

The enzyme catalyses oxaloacetate + phosphate = phosphoenolpyruvate + hydrogencarbonate. In terms of biological role, forms oxaloacetate, a four-carbon dicarboxylic acid source for the tricarboxylic acid cycle. This is Phosphoenolpyruvate carboxylase from Salmonella arizonae (strain ATCC BAA-731 / CDC346-86 / RSK2980).